The sequence spans 243 residues: Uridylate kinase (243 aa).

An ATP-binding site is contributed by 15 to 18; that stretch reads KISG. G57 serves as a coordination point for UMP. Residues G58 and R62 each contribute to the ATP site. Residues D77 and 138–145 contribute to the UMP site; that span reads TGNPFFTT. Residues T165, F171, and D174 each contribute to the ATP site.

The protein belongs to the UMP kinase family. Homohexamer.

The protein resides in the cytoplasm. It carries out the reaction UMP + ATP = UDP + ADP. It functions in the pathway pyrimidine metabolism; CTP biosynthesis via de novo pathway; UDP from UMP (UMPK route): step 1/1. Its activity is regulated as follows. Inhibited by UTP. Functionally, catalyzes the reversible phosphorylation of UMP to UDP. The protein is Uridylate kinase of Blochmanniella floridana.